Reading from the N-terminus, the 409-residue chain is Endoglucanase B (409 aa).

An N-terminal signal peptide occupies residues 1 to 21 (MKLKRIAALLTAAVMSVGVMA). Residues 23 to 66 (CGGSKSDDKSKADTKSAAETSGAEGDSSESEEIPVSQTHTNDPM) are disordered. Over residues 27–38 (KSDDKSKADTKS) the composition is skewed to basic and acidic residues. Positions 57–66 (VSQTHTNDPM) are enriched in polar residues. Glu-212 (proton donor) is an active-site residue. The Nucleophile role is filled by Glu-332.

The protein belongs to the glycosyl hydrolase 5 (cellulase A) family.

The enzyme catalyses Endohydrolysis of (1-&gt;4)-beta-D-glucosidic linkages in cellulose, lichenin and cereal beta-D-glucans.. In Ruminococcus albus, this protein is Endoglucanase B (celB).